The following is a 1299-amino-acid chain: Tenascin-N (1299 aa).

Residues 1 to 28 (MSLQEMFRFPMGLLLGSVLLVASAPATL) form the signal peptide. EGF-like domains are found at residues 167 to 198 (ERLACPGACSGHGRCVDGRCLCHEPYVGADCG), 199 to 229 (YPACPENCSGHGECVRGVCQCHEDFMSEDCS), and 230 to 260 (EKRCPGDCSGHGFCDTGECYCEEGFTGLDCA). 9 disulfide bridges follow: C171–C181, C175–C186, C188–C197, C202–C212, C206–C217, C219–C228, C233–C243, C237–C248, and C250–C259. Fibronectin type-III domains are found at residues 264–352 (TPQG…TDLA), 353–444 (VLGT…TEID), 445–532 (SPTN…TEID), 533–623 (SPAN…IDSP), 624–709 (KNLV…TDID), 710–800 (SPQN…IDSP), 801–886 (QNLV…TEID), 887–976 (GPKN…LDPP), and 977–1063 (RNLR…VGAR). Residues 605–624 (GDRESKKADTNAPTDIDSPK) are disordered. Residues 960–977 (QESKKADTKAQTELDPPR) are compositionally biased toward basic and acidic residues. The disordered stretch occupies residues 960 to 982 (QESKKADTKAQTELDPPRNLRPS). A Fibrinogen C-terminal domain is found at 1061–1278 (GARFPHPSDC…YVELKIRPHG (218 aa)). Residue N1149 is glycosylated (N-linked (GlcNAc...) asparagine).

The protein belongs to the tenascin family. Homohexamer. As to expression, not detected in normal adult mammary tissues or brain but expressed in most breast tumors and brain tumors, such as glioblastomas, astrocytomas and oligodendrogliomas, tested. In brain tumors, detected around the endothelial cell layer of the clood vessels.

Its subcellular location is the secreted. It localises to the extracellular space. It is found in the extracellular matrix. In terms of biological role, extracellular matrix protein that seems to be a ligand for ITGA8:ITGB1, ITGAV:ITGB1 and ITGA4:ITGB1. Involved in neurite outgrowth and cell migration in hippocampal explants. During endochondral bone formation, inhibits proliferation and differentiation of proteoblasts mediated by canonical WNT signaling. In tumors, stimulates angiogenesis by elongation, migration and sprouting of endothelial cells. Expressed in most mammary tumors, may facilitate tumorigenesis by supporting the migratory behavior of breast cancer cells. This Homo sapiens (Human) protein is Tenascin-N.